The following is a 230-amino-acid chain: Thymidylate kinase (230 aa).

Residue 20 to 27 coordinates ATP; the sequence is GGEGSGKS.

The protein belongs to the thymidylate kinase family.

The enzyme catalyses dTMP + ATP = dTDP + ADP. In terms of biological role, phosphorylation of dTMP to form dTDP in both de novo and salvage pathways of dTTP synthesis. This chain is Thymidylate kinase, found in Nitrobacter hamburgensis (strain DSM 10229 / NCIMB 13809 / X14).